Consider the following 182-residue polypeptide: UPF0690 protein C1orf52 homolog (182 aa).

Residues 1–61 (MAAEEKDPLS…AEKRLPGPDE (61 aa)) are disordered. A compositionally biased stretch (acidic residues) spans 23 to 32 (SDEEDNSEPE). A compositionally biased stretch (basic and acidic residues) spans 51-61 (KAEKRLPGPDE). The residue at position 67 (threonine 67) is a Phosphothreonine. Position 132 is a phosphotyrosine (tyrosine 132). A disordered region spans residues 132–182 (YEDNGDDAPQNAKKARLLPEGEETVESDDEKDEHTSKKRKIELGEPTKKKK). Acidic residues predominate over residues 151 to 162 (EGEETVESDDEK). Position 158 is a phosphoserine (serine 158). Residues 172–182 (IELGEPTKKKK) are compositionally biased toward basic and acidic residues.

Belongs to the UPF0690 family.

The polypeptide is UPF0690 protein C1orf52 homolog (Bos taurus (Bovine)).